Here is a 388-residue protein sequence, read N- to C-terminus: Formate-dependent phosphoribosylglycinamide formyltransferase (388 aa).

N(1)-(5-phospho-beta-D-ribosyl)glycinamide is bound by residues 11 to 12 and Glu-71; that span reads EL. Residues Arg-103, Lys-144, 149–154, 184–187, and Glu-192 contribute to the ATP site; these read SSGKGQ and EEFI. Residues 108 to 300 enclose the ATP-grasp domain; sequence DLAAKELGLK…EFELHLRAVL (193 aa). The Mg(2+) site is built by Glu-257 and Glu-270. N(1)-(5-phospho-beta-D-ribosyl)glycinamide is bound by residues Asp-277, Lys-349, and 356 to 357; that span reads RR.

It belongs to the PurK/PurT family. Homodimer.

The enzyme catalyses N(1)-(5-phospho-beta-D-ribosyl)glycinamide + formate + ATP = N(2)-formyl-N(1)-(5-phospho-beta-D-ribosyl)glycinamide + ADP + phosphate + H(+). Its pathway is purine metabolism; IMP biosynthesis via de novo pathway; N(2)-formyl-N(1)-(5-phospho-D-ribosyl)glycinamide from N(1)-(5-phospho-D-ribosyl)glycinamide (formate route): step 1/1. In terms of biological role, involved in the de novo purine biosynthesis. Catalyzes the transfer of formate to 5-phospho-ribosyl-glycinamide (GAR), producing 5-phospho-ribosyl-N-formylglycinamide (FGAR). Formate is provided by PurU via hydrolysis of 10-formyl-tetrahydrofolate. The sequence is that of Formate-dependent phosphoribosylglycinamide formyltransferase from Bacteroides fragilis (strain ATCC 25285 / DSM 2151 / CCUG 4856 / JCM 11019 / LMG 10263 / NCTC 9343 / Onslow / VPI 2553 / EN-2).